A 458-amino-acid chain; its full sequence is Probable threonine--tRNA ligase, cytoplasmic (458 aa).

Residues 41-104 (DPIKITLLPD…EGDCSLEIFG (64 aa)) form the TGS domain.

It belongs to the class-II aminoacyl-tRNA synthetase family.

The protein resides in the cytoplasm. The enzyme catalyses tRNA(Thr) + L-threonine + ATP = L-threonyl-tRNA(Thr) + AMP + diphosphate + H(+). This Arabidopsis thaliana (Mouse-ear cress) protein is Probable threonine--tRNA ligase, cytoplasmic.